The sequence spans 401 residues: Imidazolonepropionase (401 aa).

2 residues coordinate Fe(3+): His-66 and His-68. Zn(2+) contacts are provided by His-66 and His-68. 3 residues coordinate 4-imidazolone-5-propanoate: Arg-75, Tyr-138, and His-171. N-formimidoyl-L-glutamate is bound at residue Tyr-138. His-236 provides a ligand contact to Fe(3+). His-236 serves as a coordination point for Zn(2+). Gln-239 is a binding site for 4-imidazolone-5-propanoate. Asp-311 contributes to the Fe(3+) binding site. A Zn(2+)-binding site is contributed by Asp-311. Residues Asn-313 and Gly-315 each coordinate N-formimidoyl-L-glutamate. Residue Thr-316 participates in 4-imidazolone-5-propanoate binding.

It belongs to the metallo-dependent hydrolases superfamily. HutI family. It depends on Zn(2+) as a cofactor. The cofactor is Fe(3+).

The protein resides in the cytoplasm. The catalysed reaction is 4-imidazolone-5-propanoate + H2O = N-formimidoyl-L-glutamate. The protein operates within amino-acid degradation; L-histidine degradation into L-glutamate; N-formimidoyl-L-glutamate from L-histidine: step 3/3. Catalyzes the hydrolytic cleavage of the carbon-nitrogen bond in imidazolone-5-propanoate to yield N-formimidoyl-L-glutamate. It is the third step in the universal histidine degradation pathway. The chain is Imidazolonepropionase from Pseudomonas syringae pv. tomato (strain ATCC BAA-871 / DC3000).